The chain runs to 530 residues: Histone-arginine methyltransferase CARMER (530 aa).

Residues 141–450 (ASQYFQFYGY…QSYDVTIDLH (310 aa)) form the SAM-dependent MTase PRMT-type domain. S-adenosyl-L-methionine-binding residues include Gln-154, Arg-163, Gly-187, Glu-209, Glu-238, and Thr-266. Arg-501 is subject to Asymmetric dimethylarginine; by autocatalysis.

It belongs to the class I-like SAM-binding methyltransferase superfamily. Protein arginine N-methyltransferase family. As to quaternary structure, homodimer. The dimethylated protein is the major form.

It localises to the cytoplasm. It is found in the nucleus. The enzyme catalyses L-arginyl-[protein] + 2 S-adenosyl-L-methionine = N(omega),N(omega)-dimethyl-L-arginyl-[protein] + 2 S-adenosyl-L-homocysteine + 2 H(+). In terms of biological role, methylates (mono- and asymmetric dimethylation) the guanidino nitrogens of arginyl residues in proteins. May methylate histone H3 at 'Arg-17' and activate transcription via chromatin remodeling. The protein is Histone-arginine methyltransferase CARMER (Art4) of Drosophila sechellia (Fruit fly).